A 217-amino-acid chain; its full sequence is Peptide methionine sulfoxide reductase MsrA (217 aa).

Residues 16–39 (EALKGGRHPVLESPQPHTVLGTPI) are disordered. Residue C56 is part of the active site.

It belongs to the MsrA Met sulfoxide reductase family.

The catalysed reaction is L-methionyl-[protein] + [thioredoxin]-disulfide + H2O = L-methionyl-(S)-S-oxide-[protein] + [thioredoxin]-dithiol. It carries out the reaction [thioredoxin]-disulfide + L-methionine + H2O = L-methionine (S)-S-oxide + [thioredoxin]-dithiol. Its function is as follows. Has an important function as a repair enzyme for proteins that have been inactivated by oxidation. Catalyzes the reversible oxidation-reduction of methionine sulfoxide in proteins to methionine. In Corynebacterium efficiens (strain DSM 44549 / YS-314 / AJ 12310 / JCM 11189 / NBRC 100395), this protein is Peptide methionine sulfoxide reductase MsrA.